The primary structure comprises 362 residues: Spermidine/putrescine import ATP-binding protein PotA (362 aa).

Residues 6 to 237 (ISFKHVVKSY…PINHYVADFI (232 aa)) enclose the ABC transporter domain. 39-46 (GPSGCGKT) is a binding site for ATP.

This sequence belongs to the ABC transporter superfamily. Spermidine/putrescine importer (TC 3.A.1.11.1) family. The complex is composed of two ATP-binding proteins (PotA), two transmembrane proteins (PotB and PotC) and a solute-binding protein (PotD).

Its subcellular location is the cell membrane. It carries out the reaction ATP + H2O + polyamine-[polyamine-binding protein]Side 1 = ADP + phosphate + polyamineSide 2 + [polyamine-binding protein]Side 1.. Its function is as follows. Part of the ABC transporter complex PotABCD involved in spermidine/putrescine import. Responsible for energy coupling to the transport system. In Ligilactobacillus salivarius (strain UCC118) (Lactobacillus salivarius), this protein is Spermidine/putrescine import ATP-binding protein PotA.